The sequence spans 143 residues: Large ribosomal subunit protein uL11 (143 aa).

Belongs to the universal ribosomal protein uL11 family. In terms of assembly, part of the ribosomal stalk of the 50S ribosomal subunit. Interacts with L10 and the large rRNA to form the base of the stalk. L10 forms an elongated spine to which L12 dimers bind in a sequential fashion forming a multimeric L10(L12)X complex. One or more lysine residues are methylated.

Its function is as follows. Forms part of the ribosomal stalk which helps the ribosome interact with GTP-bound translation factors. This Burkholderia mallei (strain NCTC 10247) protein is Large ribosomal subunit protein uL11.